Here is a 192-residue protein sequence, read N- to C-terminus: Thiol-disulfide oxidoreductase ResA (192 aa).

A helical; Signal-anchor for type II membrane protein membrane pass occupies residues 22 to 41 (SSILLILVAAVVFAIVSNMK). The Thioredoxin domain occupies 47-189 (YRVGDAAPDF…LEGYLNDIAP (143 aa)). C89 and C92 form a disulfide bridge.

This sequence belongs to the thioredoxin family. ResA subfamily.

It is found in the cell membrane. Its pathway is protein modification; cytochrome c assembly. Thiol-disulfide oxidoreductase which is required in disulfide reduction during c-type cytochrome synthesis. May accept reducing equivalents from CcdA, leading to breakage of disulfide bonds in apocytochrome c; following this reduction heme can be covalently attached. This chain is Thiol-disulfide oxidoreductase ResA, found in Oceanobacillus iheyensis (strain DSM 14371 / CIP 107618 / JCM 11309 / KCTC 3954 / HTE831).